A 510-amino-acid polypeptide reads, in one-letter code: Dermokine (510 aa).

Positions 1-21 are cleaved as a signal peptide; it reads MKLKGSLACLLLFLLLGSGEA. A disordered region spans residues 117-362; the sequence is VDPAHKSWQG…SSGEGEAVSG (246 aa). Over residues 124–137 the composition is skewed to polar residues; the sequence is WQGTPGSNGAWGTN. Gly residues predominate over residues 141–158; that stretch reads PSGGHGIPGSQGSSGGPG. A compositionally biased stretch (polar residues) spans 194–221; that stretch reads GANSQGTSPQPGSVRSNNNRNTECTTPP. Composition is skewed to gly residues over residues 222-231, 240-254, and 264-292; these read GSGGSSGNSG, TNGGGSSGGSNGGSN, and SNGGGSSNSGGSNGGGSNGGGSSNGGGSN. Low complexity-rich tracts occupy residues 293–303 and 319–332; these read AGSSGSSGSSS and PSPSSGSRVGSGVR. The span at 344 to 355 shows a compositional bias: gly residues; it reads GGSGGQGQGSSG.

This sequence belongs to the dermokine family. As to quaternary structure, homooligomer. Seems to be able to homodimerize and homotrimerize. Post-translationally, O-glycosylated.

The protein localises to the secreted. Functionally, may act as a soluble regulator of keratinocyte differentiation. This is Dermokine (DMKN) from Bos taurus (Bovine).